The sequence spans 528 residues: G patch domain-containing protein 2 (528 aa).

Positions 36–119 (LEESSEQARG…NKKDHSDSDD (84 aa)) are disordered. The segment covering 63–77 (RQARKRRGRKRRSYN) has biased composition (basic residues). Basic and acidic residues predominate over residues 98–117 (EPSKDYRENHNNNKKDHSDS). Residues Ser-115, Ser-117, Ser-146, and Ser-195 each carry the phosphoserine modification. Disordered regions lie at residues 232–282 (SEET…GDDE) and 487–528 (GRDG…GKSA). Positions 239-252 (NKDKMECEEQKVSD) are enriched in basic and acidic residues. Positions 467-513 (ENNIGNRMLQNMGWTPGSGLGRDGKGISEPIQAMQRPKGLGLGFPLP) constitute a G-patch domain. A compositionally biased stretch (polar residues) spans 514 to 528 (KSTSATTTPNAGKSA).

In terms of assembly, interacts with DHX15. In terms of tissue distribution, testis.

The protein resides in the nucleus speckle. It localises to the nucleus. The protein localises to the nucleolus. Enhances the ATPase activity of DHX15 in vitro. This is G patch domain-containing protein 2 (GPATCH2) from Homo sapiens (Human).